The following is a 206-amino-acid chain: Small ribosomal subunit protein uS4 (206 aa).

In terms of domain architecture, S4 RNA-binding spans 96–157 (RRLDNVVYRM…KAKKQVRIQD (62 aa)).

The protein belongs to the universal ribosomal protein uS4 family. In terms of assembly, part of the 30S ribosomal subunit. Contacts protein S5. The interaction surface between S4 and S5 is involved in control of translational fidelity.

Its function is as follows. One of the primary rRNA binding proteins, it binds directly to 16S rRNA where it nucleates assembly of the body of the 30S subunit. In terms of biological role, with S5 and S12 plays an important role in translational accuracy. The protein is Small ribosomal subunit protein uS4 of Thioalkalivibrio sulfidiphilus (strain HL-EbGR7).